The primary structure comprises 631 residues: 1-deoxy-D-xylulose-5-phosphate synthase (631 aa).

Thiamine diphosphate-binding positions include H72 and 113-115; that span reads GHA. D144 is a binding site for Mg(2+). Residues 145-146, N174, Y287, and E370 contribute to the thiamine diphosphate site; that span reads GA. N174 contacts Mg(2+).

This sequence belongs to the transketolase family. DXPS subfamily. As to quaternary structure, homodimer. Requires Mg(2+) as cofactor. It depends on thiamine diphosphate as a cofactor.

The catalysed reaction is D-glyceraldehyde 3-phosphate + pyruvate + H(+) = 1-deoxy-D-xylulose 5-phosphate + CO2. It functions in the pathway metabolic intermediate biosynthesis; 1-deoxy-D-xylulose 5-phosphate biosynthesis; 1-deoxy-D-xylulose 5-phosphate from D-glyceraldehyde 3-phosphate and pyruvate: step 1/1. In terms of biological role, catalyzes the acyloin condensation reaction between C atoms 2 and 3 of pyruvate and glyceraldehyde 3-phosphate to yield 1-deoxy-D-xylulose-5-phosphate (DXP). This is 1-deoxy-D-xylulose-5-phosphate synthase from Prochlorococcus marinus (strain MIT 9515).